The chain runs to 305 residues: tRNA dimethylallyltransferase (305 aa).

13 to 20 (GPTSSGKT) is a binding site for ATP. 15–20 (TSSGKT) contributes to the substrate binding site. Residues 39-42 (DSKQ) are interaction with substrate tRNA.

Belongs to the IPP transferase family. As to quaternary structure, monomer. The cofactor is Mg(2+).

The enzyme catalyses adenosine(37) in tRNA + dimethylallyl diphosphate = N(6)-dimethylallyladenosine(37) in tRNA + diphosphate. Functionally, catalyzes the transfer of a dimethylallyl group onto the adenine at position 37 in tRNAs that read codons beginning with uridine, leading to the formation of N6-(dimethylallyl)adenosine (i(6)A). The polypeptide is tRNA dimethylallyltransferase (Neorickettsia sennetsu (strain ATCC VR-367 / Miyayama) (Ehrlichia sennetsu)).